The chain runs to 51 residues: Ribosome biogenesis protein Nop10 (51 aa).

The protein belongs to the NOP10 family.

In terms of biological role, involved in ribosome biogenesis; more specifically in 18S rRNA pseudouridylation and in cleavage of pre-rRNA. The protein is Ribosome biogenesis protein Nop10 of Methanococcus maripaludis (strain C6 / ATCC BAA-1332).